Reading from the N-terminus, the 352-residue chain is NAD(+)-dependent homoserine dehydrogenase (352 aa).

The protein belongs to the homoserine dehydrogenase family.

It catalyses the reaction L-homoserine + NAD(+) = L-aspartate 4-semialdehyde + NADH + H(+). Dehydrogenase involved in the degradation of canavanine, the delta-oxa-analog of arginine, allowing growth on canavanine as sole nitrogen and carbon source. Catalyzes the conversion of homoserine and NAD(+) to aspartate-semialdehyde and NADH. Is highly specific for NAD(+) and cannot use NADP(+). The protein is NAD(+)-dependent homoserine dehydrogenase of Pseudomonas canavaninivorans.